Consider the following 142-residue polypeptide: Large ribosomal subunit protein uL16 (142 aa).

Belongs to the universal ribosomal protein uL16 family. As to quaternary structure, part of the 50S ribosomal subunit.

In terms of biological role, binds 23S rRNA and is also seen to make contacts with the A and possibly P site tRNAs. The sequence is that of Large ribosomal subunit protein uL16 from Thermotoga sp. (strain RQ2).